Consider the following 89-residue polypeptide: Large ribosomal subunit protein bL27 (89 aa).

The protein belongs to the bacterial ribosomal protein bL27 family.

The protein is Large ribosomal subunit protein bL27 of Ruegeria sp. (strain TM1040) (Silicibacter sp.).